A 641-amino-acid chain; its full sequence is 1-deoxy-D-xylulose-5-phosphate synthase (641 aa).

Thiamine diphosphate is bound by residues H79 and 120–122 (AHS). Position 151 (D151) interacts with Mg(2+). Thiamine diphosphate contacts are provided by residues 152–153 (GA), N180, Y290, and E372. Residue N180 participates in Mg(2+) binding.

The protein belongs to the transketolase family. DXPS subfamily. In terms of assembly, homodimer. Requires Mg(2+) as cofactor. Thiamine diphosphate is required as a cofactor.

The catalysed reaction is D-glyceraldehyde 3-phosphate + pyruvate + H(+) = 1-deoxy-D-xylulose 5-phosphate + CO2. The protein operates within metabolic intermediate biosynthesis; 1-deoxy-D-xylulose 5-phosphate biosynthesis; 1-deoxy-D-xylulose 5-phosphate from D-glyceraldehyde 3-phosphate and pyruvate: step 1/1. In terms of biological role, catalyzes the acyloin condensation reaction between C atoms 2 and 3 of pyruvate and glyceraldehyde 3-phosphate to yield 1-deoxy-D-xylulose-5-phosphate (DXP). The protein is 1-deoxy-D-xylulose-5-phosphate synthase of Bradyrhizobium sp. (strain BTAi1 / ATCC BAA-1182).